A 200-amino-acid chain; its full sequence is Oligoribonuclease (200 aa).

The Exonuclease domain occupies 5–169 (MVWIDCEMTG…ADIRESIAEL (165 aa)). Tyr-126 is an active-site residue.

It belongs to the oligoribonuclease family.

It localises to the cytoplasm. In terms of biological role, 3'-to-5' exoribonuclease specific for small oligoribonucleotides. The sequence is that of Oligoribonuclease from Streptomyces avermitilis (strain ATCC 31267 / DSM 46492 / JCM 5070 / NBRC 14893 / NCIMB 12804 / NRRL 8165 / MA-4680).